Here is a 75-residue protein sequence, read N- to C-terminus: uncharacterized protein (75 aa).

4Fe-4S ferredoxin-type domains lie at 2–30 and 37–68; these read SHTI…KGEG and DWYW…KEEP. [3Fe-4S] cluster-binding residues include cysteine 10 and cysteine 16. [4Fe-4S] cluster contacts are provided by cysteine 20, cysteine 46, cysteine 49, and cysteine 52. Cysteine 56 serves as a coordination point for [3Fe-4S] cluster.

The cofactor is [4Fe-4S] cluster. [3Fe-4S] cluster serves as cofactor.

It localises to the plastid. The protein resides in the chloroplast. This is an uncharacterized protein from Porphyra purpurea (Red seaweed).